A 199-amino-acid chain; its full sequence is Type-4 uracil-DNA glycosylase (199 aa).

The [4Fe-4S] cluster site is built by cysteine 14 and cysteine 17. Uracil-binding positions include 41-43 (GEA), phenylalanine 55, and asparagine 81. The pseudo-FCL stretch occupies residues 77–114 (VYITNVLKCRPPNNRDPTPEEVEKCGDYLVRQLEAIRP). Cysteine 85 and cysteine 101 together coordinate [4Fe-4S] cluster. Residue histidine 163 participates in uracil binding.

The protein belongs to the uracil-DNA glycosylase (UDG) superfamily. Type 4 (UDGa) family.

It catalyses the reaction Hydrolyzes single-stranded DNA or mismatched double-stranded DNA and polynucleotides, releasing free uracil.. Product-inhibited by both uracil and apurinic/apyrimidinic sites. In terms of biological role, removes uracil bases that are present in DNA as a result of either deamination of cytosine or misincorporation of dUMP instead of dTMP. Can remove uracil from double-stranded DNA containing either a U/G or U/A base pair as well as from single-stranded DNA. The protein is Type-4 uracil-DNA glycosylase of Archaeoglobus fulgidus (strain ATCC 49558 / DSM 4304 / JCM 9628 / NBRC 100126 / VC-16).